Reading from the N-terminus, the 476-residue chain is Glycogen synthase (476 aa).

K15 is an ADP-alpha-D-glucose binding site.

It belongs to the glycosyltransferase 1 family. Bacterial/plant glycogen synthase subfamily.

It carries out the reaction [(1-&gt;4)-alpha-D-glucosyl](n) + ADP-alpha-D-glucose = [(1-&gt;4)-alpha-D-glucosyl](n+1) + ADP + H(+). Its pathway is glycan biosynthesis; glycogen biosynthesis. Functionally, synthesizes alpha-1,4-glucan chains using ADP-glucose. This chain is Glycogen synthase, found in Lactobacillus acidophilus (strain ATCC 700396 / NCK56 / N2 / NCFM).